The chain runs to 807 residues: 1,4-alpha-glucan branching enzyme GlgB (807 aa).

The active-site Nucleophile is Asp-405. Residue Glu-458 is the Proton donor of the active site.

Belongs to the glycosyl hydrolase 13 family. GlgB subfamily. Monomer.

The enzyme catalyses Transfers a segment of a (1-&gt;4)-alpha-D-glucan chain to a primary hydroxy group in a similar glucan chain.. It functions in the pathway glycan biosynthesis; glycogen biosynthesis. Catalyzes the formation of the alpha-1,6-glucosidic linkages in glycogen by scission of a 1,4-alpha-linked oligosaccharide from growing alpha-1,4-glucan chains and the subsequent attachment of the oligosaccharide to the alpha-1,6 position. The chain is 1,4-alpha-glucan branching enzyme GlgB from Histophilus somni (strain 129Pt) (Haemophilus somnus).